We begin with the raw amino-acid sequence, 103 residues long: UPF0145 protein RSKD131_1772 (103 aa).

The protein belongs to the UPF0145 family.

This chain is UPF0145 protein RSKD131_1772, found in Cereibacter sphaeroides (strain KD131 / KCTC 12085) (Rhodobacter sphaeroides).